An 842-amino-acid polypeptide reads, in one-letter code: Alanine--tRNA ligase (842 aa).

His549, His553, Cys650, and His654 together coordinate Zn(2+).

The protein belongs to the class-II aminoacyl-tRNA synthetase family. Zn(2+) is required as a cofactor.

The protein localises to the cytoplasm. It catalyses the reaction tRNA(Ala) + L-alanine + ATP = L-alanyl-tRNA(Ala) + AMP + diphosphate. Functionally, catalyzes the attachment of alanine to tRNA(Ala) in a two-step reaction: alanine is first activated by ATP to form Ala-AMP and then transferred to the acceptor end of tRNA(Ala). Also edits incorrectly charged Ser-tRNA(Ala) and Gly-tRNA(Ala) via its editing domain. This is Alanine--tRNA ligase from Campylobacter jejuni subsp. jejuni serotype O:23/36 (strain 81-176).